The sequence spans 235 residues: Large ribosomal subunit protein uL1 (235 aa).

Belongs to the universal ribosomal protein uL1 family. Part of the 50S ribosomal subunit.

Functionally, binds directly to 23S rRNA. The L1 stalk is quite mobile in the ribosome, and is involved in E site tRNA release. Protein L1 is also a translational repressor protein, it controls the translation of the L11 operon by binding to its mRNA. The polypeptide is Large ribosomal subunit protein uL1 (Mycolicibacterium vanbaalenii (strain DSM 7251 / JCM 13017 / BCRC 16820 / KCTC 9966 / NRRL B-24157 / PYR-1) (Mycobacterium vanbaalenii)).